Here is an 84-residue protein sequence, read N- to C-terminus: Small ribosomal subunit protein uS17 (84 aa).

This sequence belongs to the universal ribosomal protein uS17 family. Part of the 30S ribosomal subunit.

Its function is as follows. One of the primary rRNA binding proteins, it binds specifically to the 5'-end of 16S ribosomal RNA. This is Small ribosomal subunit protein uS17 from Clostridium botulinum (strain 657 / Type Ba4).